We begin with the raw amino-acid sequence, 98 residues long: NADH-ubiquinone oxidoreductase chain 4L (98 aa).

The next 3 helical transmembrane spans lie at 1–21 (MTPT…GMLI), 26–46 (LMAS…MTAV), and 61–81 (IIML…LVSI).

This sequence belongs to the complex I subunit 4L family. Core subunit of respiratory chain NADH dehydrogenase (Complex I) which is composed of 45 different subunits.

The protein localises to the mitochondrion inner membrane. The catalysed reaction is a ubiquinone + NADH + 5 H(+)(in) = a ubiquinol + NAD(+) + 4 H(+)(out). In terms of biological role, core subunit of the mitochondrial membrane respiratory chain NADH dehydrogenase (Complex I) which catalyzes electron transfer from NADH through the respiratory chain, using ubiquinone as an electron acceptor. Part of the enzyme membrane arm which is embedded in the lipid bilayer and involved in proton translocation. The chain is NADH-ubiquinone oxidoreductase chain 4L (MT-ND4L) from Papio hamadryas (Hamadryas baboon).